Reading from the N-terminus, the 199-residue chain is Adenylyl-sulfate kinase (199 aa).

Residues 1–21 form a disordered region; the sequence is MSQSSNITWHDSEVTKSDRQQ. Residues 10–19 are compositionally biased toward basic and acidic residues; sequence HDSEVTKSDR. ATP is bound at residue 34 to 41; that stretch reads GLSGSGKS. Residue Ser-108 is the Phosphoserine intermediate of the active site.

This sequence belongs to the APS kinase family.

It carries out the reaction adenosine 5'-phosphosulfate + ATP = 3'-phosphoadenylyl sulfate + ADP + H(+). It functions in the pathway sulfur metabolism; hydrogen sulfide biosynthesis; sulfite from sulfate: step 2/3. Its function is as follows. Catalyzes the synthesis of activated sulfate. This chain is Adenylyl-sulfate kinase, found in Staphylococcus haemolyticus (strain JCSC1435).